The chain runs to 100 residues: Apolipoprotein C-II (100 aa).

An N-terminal signal peptide occupies residues 1-22 (MGSRFLLALFLVLLVLGCEVQA). The segment at 66–74 (SVDEKLRDM) is lipid binding. The tract at residues 78-100 (SSAAMTTYASIFTDQIFTLLKGE) is lipoprotein lipase cofactor.

It belongs to the apolipoprotein C2 family. Proapolipoprotein C-II is synthesized as a sialic acid containing glycoprotein which is subsequently desialylated prior to its proteolytic processing. In terms of processing, proapolipoprotein C-II, the major form found in plasma undergoes proteolytic cleavage of its N-terminal hexapeptide to generate the mature form apolipoprotein C-II, which occurs as the minor form in plasma.

The protein resides in the secreted. Functionally, component of chylomicrons, very low-density lipoproteins (VLDL), low-density lipoproteins (LDL), and high-density lipoproteins (HDL) in plasma. Plays an important role in lipoprotein metabolism as an activator of lipoprotein lipase. This is Apolipoprotein C-II (APOC2) from Bramus lutescens (Transcaucasian mole vole).